The primary structure comprises 475 residues: Ribulose bisphosphate carboxylase large chain (475 aa).

Residues 1 to 2 constitute a propeptide that is removed on maturation; that stretch reads MV. An N-acetylproline modification is found at Pro-3. Lys-14 is subject to N6,N6,N6-trimethyllysine. 2 residues coordinate substrate: Asn-123 and Thr-173. The Proton acceptor role is filled by Lys-175. Position 177 (Lys-177) interacts with substrate. Positions 201, 203, and 204 each coordinate Mg(2+). N6-carboxylysine is present on Lys-201. His-294 (proton acceptor) is an active-site residue. 3 residues coordinate substrate: Arg-295, His-327, and Ser-379.

This sequence belongs to the RuBisCO large chain family. Type I subfamily. In terms of assembly, heterohexadecamer of 8 large chains and 8 small chains. It depends on Mg(2+) as a cofactor.

The protein localises to the plastid. The protein resides in the chloroplast. The catalysed reaction is 2 (2R)-3-phosphoglycerate + 2 H(+) = D-ribulose 1,5-bisphosphate + CO2 + H2O. It catalyses the reaction D-ribulose 1,5-bisphosphate + O2 = 2-phosphoglycolate + (2R)-3-phosphoglycerate + 2 H(+). RuBisCO catalyzes two reactions: the carboxylation of D-ribulose 1,5-bisphosphate, the primary event in carbon dioxide fixation, as well as the oxidative fragmentation of the pentose substrate in the photorespiration process. Both reactions occur simultaneously and in competition at the same active site. The polypeptide is Ribulose bisphosphate carboxylase large chain (Chlamydomonas moewusii (Chlamydomonas eugametos)).